The sequence spans 436 residues: Adenylosuccinate synthetase (436 aa).

Residues 12–18 (GDEGKGK) and 40–42 (GHT) each bind GTP. The Proton acceptor role is filled by aspartate 13. Positions 13 and 40 each coordinate Mg(2+). IMP contacts are provided by residues 13 to 16 (DEGK), 38 to 41 (NAGH), threonine 128, arginine 142, glutamine 223, threonine 238, and arginine 302. The active-site Proton donor is histidine 41. Residue 298–304 (TTTGRRR) participates in substrate binding. GTP-binding positions include arginine 304, 330–332 (KLD), and 412–414 (SLG).

Belongs to the adenylosuccinate synthetase family. In terms of assembly, homodimer. It depends on Mg(2+) as a cofactor.

The protein resides in the cytoplasm. The catalysed reaction is IMP + L-aspartate + GTP = N(6)-(1,2-dicarboxyethyl)-AMP + GDP + phosphate + 2 H(+). It participates in purine metabolism; AMP biosynthesis via de novo pathway; AMP from IMP: step 1/2. In terms of biological role, plays an important role in the de novo pathway of purine nucleotide biosynthesis. Catalyzes the first committed step in the biosynthesis of AMP from IMP. The sequence is that of Adenylosuccinate synthetase from Prochlorococcus marinus subsp. pastoris (strain CCMP1986 / NIES-2087 / MED4).